The primary structure comprises 122 residues: Small ribosomal subunit protein uS13 (122 aa).

Positions 97–122 (PVRGQRTKTNARTRKGPARTVAGKKK) are disordered.

It belongs to the universal ribosomal protein uS13 family. In terms of assembly, part of the 30S ribosomal subunit. Forms a loose heterodimer with protein S19. Forms two bridges to the 50S subunit in the 70S ribosome.

Functionally, located at the top of the head of the 30S subunit, it contacts several helices of the 16S rRNA. In the 70S ribosome it contacts the 23S rRNA (bridge B1a) and protein L5 of the 50S subunit (bridge B1b), connecting the 2 subunits; these bridges are implicated in subunit movement. Contacts the tRNAs in the A and P-sites. In Pelobacter propionicus (strain DSM 2379 / NBRC 103807 / OttBd1), this protein is Small ribosomal subunit protein uS13.